The sequence spans 292 residues: Diaminopimelate epimerase (292 aa).

Residues Asn13, Gln46, and Asn66 each contribute to the substrate site. Residue Cys75 is the Proton donor of the active site. Residues Gly76–Asn77, Asn166, Asn199, and Glu217–Arg218 contribute to the substrate site. Cys226 (proton acceptor) is an active-site residue. Gly227–Thr228 is a binding site for substrate.

It belongs to the diaminopimelate epimerase family. Homodimer.

Its subcellular location is the cytoplasm. It carries out the reaction (2S,6S)-2,6-diaminopimelate = meso-2,6-diaminopimelate. Its pathway is amino-acid biosynthesis; L-lysine biosynthesis via DAP pathway; DL-2,6-diaminopimelate from LL-2,6-diaminopimelate: step 1/1. Catalyzes the stereoinversion of LL-2,6-diaminopimelate (L,L-DAP) to meso-diaminopimelate (meso-DAP), a precursor of L-lysine and an essential component of the bacterial peptidoglycan. This chain is Diaminopimelate epimerase, found in Ralstonia nicotianae (strain ATCC BAA-1114 / GMI1000) (Ralstonia solanacearum).